A 134-amino-acid polypeptide reads, in one-letter code: Replication enhancer protein (134 aa).

It belongs to the geminiviridae replication enhancer protein family. As to quaternary structure, homooligomer. Interacts with the replication-associated protein (REP). Interacts with host proliferating cell nuclear antigen (PCNA). Interacts with host retinoblastoma-related protein 1 (RBR1), and may thereby deregulate the host cell cycle. Oligomerization and interaction with PCNA are necessary for optimal replication enhancement.

Increases viral DNA accumulation. Enhances infectivity and symptom expression. This chain is Replication enhancer protein, found in Cynanchum acutum (Little mallow).